Here is a 1370-residue protein sequence, read N- to C-terminus: DNA-directed RNA polymerase subunit beta (1370 aa).

It belongs to the RNA polymerase beta chain family. As to quaternary structure, the RNAP catalytic core consists of 2 alpha, 1 beta, 1 beta' and 1 omega subunit. When a sigma factor is associated with the core the holoenzyme is formed, which can initiate transcription.

It carries out the reaction RNA(n) + a ribonucleoside 5'-triphosphate = RNA(n+1) + diphosphate. Functionally, DNA-dependent RNA polymerase catalyzes the transcription of DNA into RNA using the four ribonucleoside triphosphates as substrates. The protein is DNA-directed RNA polymerase subunit beta of Albidiferax ferrireducens (strain ATCC BAA-621 / DSM 15236 / T118) (Rhodoferax ferrireducens).